A 226-amino-acid polypeptide reads, in one-letter code: Ribosomal RNA large subunit methyltransferase E (226 aa).

Residues glycine 82, tryptophan 84, aspartate 100, aspartate 116, and aspartate 140 each contribute to the S-adenosyl-L-methionine site. Lysine 180 acts as the Proton acceptor in catalysis.

This sequence belongs to the class I-like SAM-binding methyltransferase superfamily. RNA methyltransferase RlmE family.

Its subcellular location is the cytoplasm. The catalysed reaction is uridine(2552) in 23S rRNA + S-adenosyl-L-methionine = 2'-O-methyluridine(2552) in 23S rRNA + S-adenosyl-L-homocysteine + H(+). In terms of biological role, specifically methylates the uridine in position 2552 of 23S rRNA at the 2'-O position of the ribose in the fully assembled 50S ribosomal subunit. This is Ribosomal RNA large subunit methyltransferase E from Caulobacter sp. (strain K31).